The chain runs to 148 residues: UPF0260 protein KPK_1978 (148 aa).

Belongs to the UPF0260 family.

This Klebsiella pneumoniae (strain 342) protein is UPF0260 protein KPK_1978.